Reading from the N-terminus, the 1226-residue chain is Cytosolic carboxypeptidase 1 (1226 aa).

The interval 599–619 is disordered; it reads TEDDEDTESNSSVEQASVEVP. In terms of domain architecture, Peptidase M14 spans 848 to 1138; sequence YPYTYSTLQM…KFCVGLLRLK (291 aa). Residues histidine 920, glutamate 923, and histidine 1017 each contribute to the Zn(2+) site. Glutamate 1102 serves as the catalytic Proton donor/acceptor. Position 1168 is a phosphoserine (serine 1168). A disordered region spans residues 1206–1226; it reads YEPSAQEEVLSDSELSRTYLP.

Belongs to the peptidase M14 family. Interacts with MYLK. Requires Zn(2+) as cofactor.

It localises to the cytoplasm. Its subcellular location is the cytosol. The protein localises to the nucleus. It is found in the mitochondrion. It catalyses the reaction (L-glutamyl)(n+1)-gamma-L-glutamyl-L-glutamyl-[protein] + H2O = (L-glutamyl)(n)-gamma-L-glutamyl-L-glutamyl-[protein] + L-glutamate. It carries out the reaction C-terminal L-alpha-aminoacyl-L-glutamyl-L-glutamyl-[tubulin] + H2O = C-terminal L-alpha-aminoacyl-L-glutamyl-[tubulin] + L-glutamate. In terms of biological role, metallocarboxypeptidase that mediates protein deglutamylation of tubulin and non-tubulin target proteins. Catalyzes the removal of polyglutamate side chains present on the gamma-carboxyl group of glutamate residues within the C-terminal tail of alpha- and beta-tubulin. Specifically cleaves tubulin long-side-chains, while it is not able to remove the branching point glutamate. Also catalyzes the removal of polyglutamate residues from the carboxy-terminus of alpha-tubulin as well as non-tubulin proteins such as MYLK. Involved in KLF4 deglutamylation which promotes KLF4 proteasome-mediated degradation, thereby negatively regulating cell pluripotency maintenance and embryogenesis. In Homo sapiens (Human), this protein is Cytosolic carboxypeptidase 1.